The sequence spans 120 residues: Ribosome-binding factor A (120 aa).

Belongs to the RbfA family. As to quaternary structure, monomer. Binds 30S ribosomal subunits, but not 50S ribosomal subunits or 70S ribosomes.

It localises to the cytoplasm. In terms of biological role, one of several proteins that assist in the late maturation steps of the functional core of the 30S ribosomal subunit. Associates with free 30S ribosomal subunits (but not with 30S subunits that are part of 70S ribosomes or polysomes). Required for efficient processing of 16S rRNA. May interact with the 5'-terminal helix region of 16S rRNA. This is Ribosome-binding factor A from Rickettsia felis (strain ATCC VR-1525 / URRWXCal2) (Rickettsia azadi).